The sequence spans 151 residues: Endoribonuclease YbeY (151 aa).

H108, H112, and D118 together coordinate Zn(2+).

The protein belongs to the endoribonuclease YbeY family. Zn(2+) serves as cofactor.

It localises to the cytoplasm. Its function is as follows. Single strand-specific metallo-endoribonuclease involved in late-stage 70S ribosome quality control and in maturation of the 3' terminus of the 16S rRNA. This Porphyromonas gingivalis (strain ATCC 33277 / DSM 20709 / CIP 103683 / JCM 12257 / NCTC 11834 / 2561) protein is Endoribonuclease YbeY.